Here is a 631-residue protein sequence, read N- to C-terminus: Probable protein phosphatase 2C 31 (631 aa).

2 disordered regions span residues 119–142 and 205–231; these read GPLHATSGRFSEASGSASTASDRF and LSGRRSNGPAEPTTKSDGDYRSTPKGN. A compositionally biased stretch (polar residues) spans 131–140; it reads ASGSASTASD. One can recognise a PPM-type phosphatase domain in the interval 221-622; that stretch reads DGDYRSTPKG…DDVSIIVMSF (402 aa). Positions 261 and 262 each coordinate Mn(2+). The tract at residues 324–347 is disordered; sequence GGDDDPDAERKAKRGRIERNADDD. The Mn(2+) site is built by Asp550 and Asp613.

It belongs to the PP2C family. The cofactor is Mg(2+). It depends on Mn(2+) as a cofactor.

The catalysed reaction is O-phospho-L-seryl-[protein] + H2O = L-seryl-[protein] + phosphate. It carries out the reaction O-phospho-L-threonyl-[protein] + H2O = L-threonyl-[protein] + phosphate. This Oryza sativa subsp. japonica (Rice) protein is Probable protein phosphatase 2C 31.